A 212-amino-acid chain; its full sequence is Cell division protein YtfB (212 aa).

A helical membrane pass occupies residues 34–50 (GIIIAAIVLVVGFLLPS). A disordered region spans residues 88–127 (NDPDQVAPVAPEPIQEGQPEEQPQTTQTQPFQPDSGIDNQ). Residues 99–120 (EPIQEGQPEEQPQTTQTQPFQP) show a composition bias toward low complexity. The segment at 117 to 212 (PFQPDSGIDN…QPDGSFIRAR (96 aa)) is oapA.

This sequence belongs to the OapA family.

It localises to the cell inner membrane. Its function is as follows. Cell division protein whose function is related to the generation of a transient cell wall structure. Function is linked to the late stages of cell division. In Escherichia coli (strain K12), this protein is Cell division protein YtfB (ytfB).